The following is an 80-amino-acid chain: U6-ctenitoxin-Pn1a (80 aa).

A signal peptide spans 1-21 (MWLKIQVFVLALALITLGIQA). A propeptide spanning residues 22–37 (EPNSGPNNPLIQEEAR) is cleaved from the precursor. Intrachain disulfides connect cysteine 39-cysteine 54, cysteine 46-cysteine 59, cysteine 53-cysteine 69, and cysteine 61-cysteine 67. Residues 72 to 80 (TLGDLFGRR) constitute a propeptide that is removed on maturation.

This sequence belongs to the neurotoxin 02 (plectoxin) family. 01 (Tx3) subfamily. Expressed by the venom gland.

It is found in the secreted. Functionally, antagonist of L-type calcium channels (Cav1/CACNA1). In Phoneutria nigriventer (Brazilian armed spider), this protein is U6-ctenitoxin-Pn1a.